A 346-amino-acid polypeptide reads, in one-letter code: Endo-1,4-beta-xylanase B (346 aa).

An N-terminal signal peptide occupies residues 1–19; sequence MKGLPALLLLLIGCVSSFG. Positions 41-338 constitute a GH10 domain; it reads GNNFWSLPDA…KPCYFAIREL (298 aa). The active-site Proton donor is the Glu-153. Glu-259 (nucleophile) is an active-site residue.

The protein belongs to the glycosyl hydrolase 10 (cellulase F) family.

The catalysed reaction is Endohydrolysis of (1-&gt;4)-beta-D-xylosidic linkages in xylans.. The chain is Endo-1,4-beta-xylanase B (xynB) from Thermotoga neapolitana.